A 290-amino-acid chain; its full sequence is Bifunctional protein FolD (290 aa).

NADP(+) contacts are provided by residues 169–171, Ile-194, and Ile-235; that span reads GAS.

It belongs to the tetrahydrofolate dehydrogenase/cyclohydrolase family. Homodimer.

It catalyses the reaction (6R)-5,10-methylene-5,6,7,8-tetrahydrofolate + NADP(+) = (6R)-5,10-methenyltetrahydrofolate + NADPH. It carries out the reaction (6R)-5,10-methenyltetrahydrofolate + H2O = (6R)-10-formyltetrahydrofolate + H(+). Its pathway is one-carbon metabolism; tetrahydrofolate interconversion. Functionally, catalyzes the oxidation of 5,10-methylenetetrahydrofolate to 5,10-methenyltetrahydrofolate and then the hydrolysis of 5,10-methenyltetrahydrofolate to 10-formyltetrahydrofolate. This Helicobacter pylori (strain HPAG1) protein is Bifunctional protein FolD.